The chain runs to 130 residues: Small ribosomal subunit protein eS17 (130 aa).

A compositionally biased stretch (basic and acidic residues) spans 74–84; the sequence is QEEERERRDNY. Positions 74–97 are disordered; the sequence is QEEERERRDNYMPEISTVDPSQLT.

Belongs to the eukaryotic ribosomal protein eS17 family.

The sequence is that of Small ribosomal subunit protein eS17 (rps-17) from Caenorhabditis elegans.